A 446-amino-acid chain; its full sequence is CBL-interacting protein kinase 8 (446 aa).

Residues 13–266 enclose the Protein kinase domain; the sequence is YEVGRTIGEG…IEEIRNDEWF (254 aa). ATP is bound by residues 19-27 and Lys-42; that span reads IGEGTFAKV. The active-site Proton acceptor is the Asp-136. The tract at residues 154–181 is activation loop; the sequence is DFGLSAWPAQGGALLRTTCGTPNYVAPE. The region spanning 301 to 329 is the NAF domain; that stretch reads LDDEAGPLTLNAFDLIILSQGLNLAALFD. The tract at residues 336-365 is PPI; it reads KLQNRFLSRKPAKVIMSSMEVVAQSMGYKT.

The protein belongs to the protein kinase superfamily. CAMK Ser/Thr protein kinase family. SNF1 subfamily. The cofactor is Mn(2+).

It carries out the reaction L-seryl-[protein] + ATP = O-phospho-L-seryl-[protein] + ADP + H(+). It catalyses the reaction L-threonyl-[protein] + ATP = O-phospho-L-threonyl-[protein] + ADP + H(+). Functionally, CIPK serine-threonine protein kinases interact with CBL proteins. Binding of a CBL protein to the regulatory NAF domain of CIPK protein lead to the activation of the kinase in a calcium-dependent manner. The chain is CBL-interacting protein kinase 8 (CIPK8) from Oryza sativa subsp. japonica (Rice).